We begin with the raw amino-acid sequence, 333 residues long: Probable G-protein coupled receptor 33 (333 aa).

Over 1–30 (MDLINSTDYLINASTLVRNSTQFLAPASKM) the chain is Extracellular. Residues Asn5, Asn12, and Asn19 are each glycosylated (N-linked (GlcNAc...) asparagine). A helical transmembrane segment spans residues 31–53 (IIALSLYISSIIGTITNGLYLWV). Residues 54–64 (LRFKMKQTVNT) lie on the Cytoplasmic side of the membrane. Residues 65–86 (LLFFHLILSYFISTMILPFMAT) traverse the membrane as a helical segment. Residues 87-103 (SQLQDNHWNFGTALCKV) lie on the Extracellular side of the membrane. A disulfide bridge connects residues Cys101 and Cys179. A helical membrane pass occupies residues 104–124 (FNGTLSLGMFTSVFFLSAIGL). Over 125–143 (DRYLLTLHPVWSQQHRTPR) the chain is Cytoplasmic. A helical membrane pass occupies residues 144-165 (WASSIVLGVWISAAALSIPYLI). At 166–209 (FRETHHDRKGKVTCQNNYAVSTNWESKEMQASRQWIHVACFISR) the chain is on the extracellular side. Residues 210-230 (FLLGFLLPFFIIIFCYERVAS) traverse the membrane as a helical segment. Over 231 to 246 (KVKERSLFKSSKPFKV) the chain is Cytoplasmic. A helical membrane pass occupies residues 247–268 (MMTAIISFFVCWMPYHIHQGLL). The Extracellular segment spans residues 269 to 283 (LTTNQSLLLELTLIL). An N-linked (GlcNAc...) asparagine glycan is attached at Asn272. A helical transmembrane segment spans residues 284–303 (TVLTTSFNTIFSPTLYLFVG). Over 304-333 (ENFKKVFKKSILALFESTFSEDSSVERTQT) the chain is Cytoplasmic.

It belongs to the G-protein coupled receptor 1 family. Expressed in spleen, lung, heart, liver, kidney, pancreas, thymus, gonads and leukocytes.

The protein localises to the cell membrane. Orphan receptor; could be a chemoattractant receptor. The polypeptide is Probable G-protein coupled receptor 33 (GPR33) (Homo sapiens (Human)).